A 1277-amino-acid polypeptide reads, in one-letter code: NPC intracellular cholesterol transporter 1 (1277 aa).

An N-terminal signal peptide occupies residues 1–22 (MSARGPAFGLLLLLLCPVQVFS). At 23-269 (QSCVWYGECG…WRILGLDAMY (247 aa)) the chain is on the lumenal side. Cystine bridges form between C25/C74, C31/C42, C63/C109, C75/C113, C97/C238, C100/C160, C177/C184, C227/C243, and C240/C247. N41 is a cholesterol binding site. N-linked (GlcNAc...) asparagine glycosylation occurs at N70. Q79 contacts cholesterol. Residues N122 and N135 are each glycosylated (N-linked (GlcNAc...) asparagine). Positions 175–205 (LLCGREAQACNATNWIEYMFNKDNGQAPFTI) are important for cholesterol binding and cholesterol transfer from NPC1 to liposomes. N185 and N222 each carry an N-linked (GlcNAc...) asparagine glycan. A helical transmembrane segment spans residues 270–290 (VIMWSSYMAFLIVFFGAFFAV). The Cytoplasmic portion of the chain corresponds to 291-350 (WCYRKRYFVSEYTPIDGNIAFSVNSSDKGQAFCCDPLGAAFERGLRRLFAQWGAFCVRHP). Residues 351 to 371 (GCVVFFSLAFIVACSSGLVFI) traverse the membrane as a helical segment. Residues 372 to 621 (RVTTDPVDLW…ELNRESNSDL (250 aa)) are Lumenal-facing. 4 N-linked (GlcNAc...) asparagine glycosylation sites follow: N415, N452, N459, and N478. Intrachain disulfides connect C468-C479 and C516-C533. One can recognise an SSD domain in the interval 620–785 (DLFTILISYA…ITCFVSLLGL (166 aa)). Residues 622 to 642 (FTILISYAIMFLYISIALGHI) form a helical membrane-spanning segment. Topologically, residues 643–653 (KSCSRLLVDSK) are cytoplasmic. The chain crosses the membrane as a helical span at residues 654–674 (ISLGIAGILIVLSSVACSLGI). Residues 675 to 677 (FSY) are Lumenal-facing. Residues 678–698 (IGVPLTLIVIEVIPFLVLAVG) traverse the membrane as a helical segment. Residues 699–734 (VDNIFILVQTYQRDERLQGETLDQQLGRVLGEVAPS) lie on the Cytoplasmic side of the membrane. Residues 735–755 (MFLSSFSETVAFFLGGLSVVP) form a helical membrane-spanning segment. Residues 756-759 (AVHT) lie on the Lumenal side of the membrane. Residues 760–780 (FSLFAGMAVLIDFLLQITCFV) form a helical membrane-spanning segment. Residues 781 to 832 (SLLGLDIKRQEKNRLDVVCCVQGAEDGAGVQASESCLFRFFKNSYAPLLLKD) lie on the Cytoplasmic side of the membrane. The chain crosses the membrane as a helical span at residues 833-853 (WMRPIVIAVFVGVLSFSIAVL). Topologically, residues 854-1097 (NKVEIGLDQS…EQYLTVIDDT (244 aa)) are lumenal. A glycan (N-linked (GlcNAc...) asparagine) is linked at N898. C909 and C914 are joined by a disulfide. N-linked (GlcNAc...) asparagine glycans are attached at residues N916, N931, N961, N968, N1028, and N1063. Cystine bridges form between C956/C1011, C957/C979, and C967/C976. Residues 1098–1118 (IFNLGVSLGAIFLVTVVLMGC) form a helical membrane-spanning segment. Topologically, residues 1119–1123 (ELWAT) are cytoplasmic. A helical transmembrane segment spans residues 1124–1144 (VIMCVTIAMILVNMFGVMWLW). A topological domain (lumenal) is located at residue G1145. Residues 1146-1166 (ISLNAVSLVNLVMSCGISVEF) traverse the membrane as a helical segment. At 1167-1194 (CSHITRAFTLSTKGSRVDRAEEALAHMG) the chain is on the cytoplasmic side. The helical transmembrane segment at 1195-1215 (SSVFSGITLTKFGGIVVLAFA) threads the bilayer. Residues 1216-1226 (KSQIFQIFYFR) are Lumenal-facing. The helical transmembrane segment at 1227–1247 (MYLAIVLLGATHGLIFLPVLL) threads the bilayer. Residues 1248–1277 (SYIGPSINKAKSLATQERYKGTEREQLLNF) lie on the Cytoplasmic side of the membrane. A required for location in lysosomes region spans residues 1274–1277 (LLNF). The short motif at 1274-1277 (LLNF) is the Di-leucine motif element.

This sequence belongs to the patched family. Interacts (via the second lumenal domain) with NPC2. Interacts with TMEM97; the interaction may decrease NPC1 availability to the cell. Interacts with TIM1. Interacts with SLC38A9; this interaction inhibits cholesterol-mediated mTORC1 activation via its sterol transport activity. Post-translationally, N-glycosylated. In terms of tissue distribution, detected in corpus luteum, granulosa cells and adrenal gland.

The protein localises to the late endosome membrane. It localises to the lysosome membrane. The catalysed reaction is cholesterol(in) = cholesterol(out). Functionally, intracellular cholesterol transporter which acts in concert with NPC2 and plays an important role in the egress of cholesterol from the endosomal/lysosomal compartment. Unesterified cholesterol that has been released from LDLs in the lumen of the late endosomes/lysosomes is transferred by NPC2 to the cholesterol-binding pocket in the N-terminal domain of NPC1. Cholesterol binds to NPC1 with the hydroxyl group buried in the binding pocket. Binds oxysterol with higher affinity than cholesterol. May play a role in vesicular trafficking in glia, a process that may be crucial for maintaining the structural and functional integrity of nerve terminals. Inhibits cholesterol-mediated mTORC1 activation throught its interaction with SLC38A9. This is NPC intracellular cholesterol transporter 1 from Sus scrofa (Pig).